A 467-amino-acid polypeptide reads, in one-letter code: ATP synthase subunit beta (467 aa).

150 to 157 (GGAGVGKT) is an ATP binding site.

The protein belongs to the ATPase alpha/beta chains family. In terms of assembly, F-type ATPases have 2 components, CF(1) - the catalytic core - and CF(0) - the membrane proton channel. CF(1) has five subunits: alpha(3), beta(3), gamma(1), delta(1), epsilon(1). CF(0) has three main subunits: a(1), b(2) and c(9-12). The alpha and beta chains form an alternating ring which encloses part of the gamma chain. CF(1) is attached to CF(0) by a central stalk formed by the gamma and epsilon chains, while a peripheral stalk is formed by the delta and b chains.

The protein localises to the cell inner membrane. The catalysed reaction is ATP + H2O + 4 H(+)(in) = ADP + phosphate + 5 H(+)(out). Its function is as follows. Produces ATP from ADP in the presence of a proton gradient across the membrane. The catalytic sites are hosted primarily by the beta subunits. The polypeptide is ATP synthase subunit beta (Polaromonas sp. (strain JS666 / ATCC BAA-500)).